A 370-amino-acid chain; its full sequence is Anhydro-N-acetylmuramic acid kinase (370 aa).

12–19 provides a ligand contact to ATP; that stretch reads GTSLDGID.

It belongs to the anhydro-N-acetylmuramic acid kinase family.

The enzyme catalyses 1,6-anhydro-N-acetyl-beta-muramate + ATP + H2O = N-acetyl-D-muramate 6-phosphate + ADP + H(+). It functions in the pathway amino-sugar metabolism; 1,6-anhydro-N-acetylmuramate degradation. It participates in cell wall biogenesis; peptidoglycan recycling. Catalyzes the specific phosphorylation of 1,6-anhydro-N-acetylmuramic acid (anhMurNAc) with the simultaneous cleavage of the 1,6-anhydro ring, generating MurNAc-6-P. Is required for the utilization of anhMurNAc either imported from the medium or derived from its own cell wall murein, and thus plays a role in cell wall recycling. The sequence is that of Anhydro-N-acetylmuramic acid kinase from Yersinia enterocolitica serotype O:8 / biotype 1B (strain NCTC 13174 / 8081).